Consider the following 546-residue polypeptide: MFS-type transporter patC (546 aa).

Positions 1–15 (MSIDASPSESVLESQ) are enriched in polar residues. The tract at residues 1 to 29 (MSIDASPSESVLESQTPDRVDESIPIKAE) is disordered. Over residues 16 to 29 (TPDRVDESIPIKAE) the composition is skewed to basic and acidic residues. The next 14 membrane-spanning stretches (helical) occupy residues 41–61 (IVGF…LLYG), 89–109 (VGFT…YAIF), 113–133 (WLFL…GAAP), 143–163 (VWAG…ITIL), 171–191 (VYVG…PIIG), 203–223 (WSFY…VFLL), 245–265 (WVGT…IVFG), 277–297 (IALY…QYFC), 318–338 (LLLY…VYYI), 350–370 (GIMS…TILL), 379–399 (GYFI…AVLM), 416–436 (ILMG…PAIV), 447–467 (FMNI…SAIF), and 515–535 (VIVS…ALYV).

Belongs to the major facilitator superfamily. TCR/Tet family.

Its subcellular location is the vacuole membrane. The protein localises to the cell membrane. Functionally, MFS-type transporter; part of the gene cluster that mediates the biosynthesis of patulin, an acetate-derived tetraketide mycotoxin produced by several fungal species that shows antimicrobial properties against several bacteria. May be involved in the secretion of E-ascladiol to be converted to patulin by the secreted patulin synthase patE. The polypeptide is MFS-type transporter patC (Penicillium expansum (Blue mold rot fungus)).